Consider the following 470-residue polypeptide: Argininosuccinate lyase (470 aa).

It belongs to the lyase 1 family. Argininosuccinate lyase subfamily.

The protein localises to the cytoplasm. The catalysed reaction is 2-(N(omega)-L-arginino)succinate = fumarate + L-arginine. The protein operates within amino-acid biosynthesis; L-arginine biosynthesis; L-arginine from L-ornithine and carbamoyl phosphate: step 3/3. The protein is Argininosuccinate lyase of Prochlorococcus marinus (strain MIT 9303).